Here is a 1055-residue protein sequence, read N- to C-terminus: Kinesin-like protein KIN-7D, mitochondrial (1055 aa).

Residues 1–23 (MASSSSRTRSSRPPSPASSTSSS) are compositionally biased toward low complexity. The interval 1-36 (MASSSSRTRSSRPPSPASSTSSSHLSNRLIPRSNST) is disordered. The transit peptide at 1-96 (MASSSSRTRS…PMDDTISSER (96 aa)) directs the protein to the mitochondrion. The Kinesin motor domain maps to 98-415 (SISVTVRFRP…LKFASRAKSI (318 aa)). 178 to 185 (GVTSSGKT) provides a ligand contact to ATP. 3 coiled-coil regions span residues 419–503 (ASRN…ILVS), 618–653 (PENSQTQIQNLEREIHEKQRQMRGLEQLIIESGEAS), and 694–823 (LQEK…LAQT). Residues 826–856 (PMNGVNRKYNDGARSGRKGRISSSRSSGDEF) form a disordered region. The stretch at 880-911 (LESALAEKEFIEDEYRKKAEEAKRREEALEND) forms a coiled coil. The disordered stretch occupies residues 926 to 963 (NGALPEPNGTDPGRELEKSQSHAVLKERQVSSAPRQPE). Positions 937–954 (PGRELEKSQSHAVLKERQ) are enriched in basic and acidic residues. The RING-type zinc finger occupies 1008 to 1043 (CKVCFESPTAAILLPCRHFCLCKSCSLACSECPICR).

The protein belongs to the TRAFAC class myosin-kinesin ATPase superfamily. Kinesin family. KIN-7 subfamily.

It is found in the mitochondrion. This is Kinesin-like protein KIN-7D, mitochondrial from Arabidopsis thaliana (Mouse-ear cress).